Reading from the N-terminus, the 109-residue chain is Iron-sulfur cluster assembly protein CyaY (109 aa).

This sequence belongs to the frataxin family.

Functionally, involved in iron-sulfur (Fe-S) cluster assembly. May act as a regulator of Fe-S biogenesis. In Bordetella pertussis (strain Tohama I / ATCC BAA-589 / NCTC 13251), this protein is Iron-sulfur cluster assembly protein CyaY.